The following is a 320-amino-acid chain: Cytochrome f (320 aa).

The first 35 residues, 1 to 35, serve as a signal peptide directing secretion; sequence MQTINTFSWINQRITRSISVLLLVYIITRTSISSA. Heme is bound by residues Tyr36, Cys56, Cys59, and His60. A helical membrane pass occupies residues 286–306; the sequence is VQGLLFFLASVILAQIFLVLK.

It belongs to the cytochrome f family. As to quaternary structure, the 4 large subunits of the cytochrome b6-f complex are cytochrome b6, subunit IV (17 kDa polypeptide, petD), cytochrome f and the Rieske protein, while the 4 small subunits are PetG, PetL, PetM and PetN. The complex functions as a dimer. Heme serves as cofactor.

The protein resides in the plastid thylakoid membrane. In terms of biological role, component of the cytochrome b6-f complex, which mediates electron transfer between photosystem II (PSII) and photosystem I (PSI), cyclic electron flow around PSI, and state transitions. This Cuscuta exaltata (Tall dodder) protein is Cytochrome f.